We begin with the raw amino-acid sequence, 352 residues long: Ion-translocating oxidoreductase complex subunit D (352 aa).

The next 4 helical transmembrane spans lie at 20–40 (IMLL…WFFG), 42–62 (GTLF…AIVL), 69–91 (VASH…SIPP), and 123–143 (PAMI…TSWL). Thr-187 is subject to FMN phosphoryl threonine. Transmembrane regions (helical) follow at residues 215–235 (LAGV…VFLL), 242–262 (WHIP…GWLF), 267–287 (LASP…FFIL), 301–321 (LIFG…GGYP), and 322–342 (DGVA…DYYT).

Belongs to the NqrB/RnfD family. The complex is composed of six subunits: RsxA, RsxB, RsxC, RsxD, RsxE and RsxG. The cofactor is FMN.

The protein localises to the cell inner membrane. Functionally, part of a membrane-bound complex that couples electron transfer with translocation of ions across the membrane. Required to maintain the reduced state of SoxR. In Salmonella enteritidis PT4 (strain P125109), this protein is Ion-translocating oxidoreductase complex subunit D.